A 632-amino-acid polypeptide reads, in one-letter code: DNA polymerase eta (632 aa).

The 284-residue stretch at 26 to 309 folds into the UmuC domain; that stretch reads IAHIDMNAFF…FEITSFWTLG (284 aa). Mg(2+) contacts are provided by Asp-30 and Asp-155. The UBZ3-type zinc finger occupies 545–580; sequence EKTPKLECCKYQVTFTDQKALQEHADYHLALKLSEG. The Zn(2+) site is built by Cys-552, Cys-553, His-568, and His-572. A disordered region spans residues 598–632; sequence LLFSRKRPNSQHTATPQKKQVTSSKNILSFFTRKK. Residues 607–626 are compositionally biased toward polar residues; the sequence is SQHTATPQKKQVTSSKNILS. The POL30-binding stretch occupies residues 625–632; sequence LSFFTRKK.

This sequence belongs to the DNA polymerase type-Y family. Interacts with POL30. This interaction is essential for the polymerase eta function.

Its subcellular location is the nucleus. The catalysed reaction is DNA(n) + a 2'-deoxyribonucleoside 5'-triphosphate = DNA(n+1) + diphosphate. Functionally, DNA polymerase specifically involved in DNA repair. Plays an important role in translesion synthesis, where the normal high fidelity DNA polymerases cannot proceed and DNA synthesis stalls. Plays an important role in the repair of UV-induced pyrimidine dimers. Depending on the context, it inserts the correct base, but causes frequent base transitions and transversions. Efficiently incorporates nucleotides opposite to other UV or oxidative DNA damages like O(6)-methylguanine, 7,8-dihydro-8-oxoguanine, 2,6-diamino-4-hydroxy-5-formamidopyrimidine of 2'-deoxyguanosine (FaPydG), or p-benzoquinone DNA adducts. In Saccharomyces cerevisiae (strain ATCC 204508 / S288c) (Baker's yeast), this protein is DNA polymerase eta (RAD30).